A 68-amino-acid polypeptide reads, in one-letter code: Large ribosomal subunit protein bL35 (68 aa).

This sequence belongs to the bacterial ribosomal protein bL35 family.

This Rickettsia conorii (strain ATCC VR-613 / Malish 7) protein is Large ribosomal subunit protein bL35.